The following is a 517-amino-acid chain: Perilipin-1 (517 aa).

At Ser-81 the chain carries Phosphoserine. At Thr-85 the chain carries Phosphothreonine. Ser-126, Ser-130, Ser-132, Ser-137, and Ser-174 each carry phosphoserine. The disordered stretch occupies residues 197–217; sequence VESAPSSGRQKTQKAPKAKPS. 3 positions are modified to phosphothreonine: Thr-224, Thr-299, and Thr-301. Residues 285 to 321 are disordered; it reads HNLAASKDENHEDQTDTEGEETDEEEEEEESEAEENV. The interval 291–322 is required for interaction with CIDEC; it reads KDENHEDQTDTEGEETDEEEEEEESEAEENVL. A compositionally biased stretch (acidic residues) spans 299–319; the sequence is TDTEGEETDEEEEEEESEAEE. Residues Ser-315, Ser-385, Ser-387, Pro-408, Ser-411, Ser-434, Ser-436, Ser-440, Ser-460, Ser-492, and Ser-494 each carry the phosphoserine modification. Residues 415 to 495 are disordered; that stretch reads PESEFQDIDN…KPARRVSDSF (81 aa). Residues 483-492 are compositionally biased toward basic and acidic residues; sequence PREKPARRVS.

It belongs to the perilipin family. In terms of assembly, interacts with ABHD5. Interacts with CIDEC. Interacts with AQP7. Major cAMP-dependent protein kinase substrate in adipocytes, also dephosphorylated by PP1. When phosphorylated, may be maximally sensitive to HSL. When unphosphorylated, may play a role in the inhibition of lipolysis, by acting as a barrier in lipid droplet. Post-translationally, the N-terminus is blocked. As to expression, adipocytes.

Its subcellular location is the endoplasmic reticulum. It is found in the lipid droplet. Its function is as follows. Modulator of adipocyte lipid metabolism. Coats lipid storage droplets to protect them from breakdown by hormone-sensitive lipase (HSL). Its absence may result in leanness. Plays a role in unilocular lipid droplet formation by activating CIDEC. Their interaction promotes lipid droplet enlargement and directional net neutral lipid transfer. May modulate lipolysis and triglyceride levels. This Rattus norvegicus (Rat) protein is Perilipin-1 (Plin1).